The sequence spans 79 residues: uncharacterized protein (79 aa).

Residues 10–60 (EAVLTMDSKGQILLPKELRERAGLKAGDRLVAIAGCDENEEVCCLILVKAE) form the SpoVT-AbrB domain.

This is an uncharacterized protein from Archaeoglobus fulgidus (strain ATCC 49558 / DSM 4304 / JCM 9628 / NBRC 100126 / VC-16).